We begin with the raw amino-acid sequence, 366 residues long: tRNA 2-selenouridine synthase (366 aa).

The Rhodanese domain occupies 12-135 (FLNDVPMMDA…MRTFLLDTLH (124 aa)). The active-site S-selanylcysteine intermediate is cysteine 95.

This sequence belongs to the SelU family. As to quaternary structure, monomer.

It catalyses the reaction 5-methylaminomethyl-2-thiouridine(34) in tRNA + selenophosphate + (2E)-geranyl diphosphate + H2O + H(+) = 5-methylaminomethyl-2-selenouridine(34) in tRNA + (2E)-thiogeraniol + phosphate + diphosphate. It carries out the reaction 5-methylaminomethyl-2-thiouridine(34) in tRNA + (2E)-geranyl diphosphate = 5-methylaminomethyl-S-(2E)-geranyl-thiouridine(34) in tRNA + diphosphate. The enzyme catalyses 5-methylaminomethyl-S-(2E)-geranyl-thiouridine(34) in tRNA + selenophosphate + H(+) = 5-methylaminomethyl-2-(Se-phospho)selenouridine(34) in tRNA + (2E)-thiogeraniol. The catalysed reaction is 5-methylaminomethyl-2-(Se-phospho)selenouridine(34) in tRNA + H2O = 5-methylaminomethyl-2-selenouridine(34) in tRNA + phosphate. Functionally, involved in the post-transcriptional modification of the uridine at the wobble position (U34) of tRNA(Lys), tRNA(Glu) and tRNA(Gln). Catalyzes the conversion of 2-thiouridine (S2U-RNA) to 2-selenouridine (Se2U-RNA). Acts in a two-step process involving geranylation of 2-thiouridine (S2U) to S-geranyl-2-thiouridine (geS2U) and subsequent selenation of the latter derivative to 2-selenouridine (Se2U) in the tRNA chain. This chain is tRNA 2-selenouridine synthase, found in Pseudomonas syringae pv. tomato (strain ATCC BAA-871 / DC3000).